The sequence spans 186 residues: MKLIVGLGNPGREYELTRHNIGFMAIDELAKRWNISLNEQKFKGMFGAGFVNGEKVILLKPLTYMNLSGESIRPLMDYYKIDLEDFIIMYDDLDLPVGKLRLRMKGSAGGHNGVKSTIAHLGTQEFQRIRMGIDRPKNGMKVVDYVLGRFTAEEMVDVNHAIEKAANACEEWLNKSFLQVMNDFNN.

Tyr-14 lines the tRNA pocket. The active-site Proton acceptor is the His-19. TRNA-binding residues include Tyr-64, Asn-66, and Asn-112.

It belongs to the PTH family. In terms of assembly, monomer.

The protein resides in the cytoplasm. The enzyme catalyses an N-acyl-L-alpha-aminoacyl-tRNA + H2O = an N-acyl-L-amino acid + a tRNA + H(+). Functionally, hydrolyzes ribosome-free peptidyl-tRNAs (with 1 or more amino acids incorporated), which drop off the ribosome during protein synthesis, or as a result of ribosome stalling. Catalyzes the release of premature peptidyl moieties from peptidyl-tRNA molecules trapped in stalled 50S ribosomal subunits, and thus maintains levels of free tRNAs and 50S ribosomes. The sequence is that of Peptidyl-tRNA hydrolase from Bacillus cytotoxicus (strain DSM 22905 / CIP 110041 / 391-98 / NVH 391-98).